We begin with the raw amino-acid sequence, 118 residues long: Large ribosomal subunit protein bL19 (118 aa).

The protein belongs to the bacterial ribosomal protein bL19 family.

This protein is located at the 30S-50S ribosomal subunit interface and may play a role in the structure and function of the aminoacyl-tRNA binding site. The polypeptide is Large ribosomal subunit protein bL19 (Dictyoglomus thermophilum (strain ATCC 35947 / DSM 3960 / H-6-12)).